Here is a 151-residue protein sequence, read N- to C-terminus: Methylated-DNA--protein-cysteine methyltransferase (151 aa).

C119 acts as the Nucleophile; methyl group acceptor in catalysis.

The protein belongs to the MGMT family.

The protein resides in the cytoplasm. It catalyses the reaction a 6-O-methyl-2'-deoxyguanosine in DNA + L-cysteinyl-[protein] = S-methyl-L-cysteinyl-[protein] + a 2'-deoxyguanosine in DNA. It carries out the reaction a 4-O-methyl-thymidine in DNA + L-cysteinyl-[protein] = a thymidine in DNA + S-methyl-L-cysteinyl-[protein]. Functionally, involved in the cellular defense against the biological effects of O6-methylguanine (O6-MeG) and O4-methylthymine (O4-MeT) in DNA. Repairs the methylated nucleobase in DNA by stoichiometrically transferring the methyl group to a cysteine residue in the enzyme. This is a suicide reaction: the enzyme is irreversibly inactivated. This chain is Methylated-DNA--protein-cysteine methyltransferase, found in Saccharolobus islandicus (strain M.16.27) (Sulfolobus islandicus).